The primary structure comprises 476 residues: Stromelysin-2 (476 aa).

Positions methionine 1 to alanine 17 are cleaved as a signal peptide. Residues tyrosine 18–glycine 99 constitute a propeptide, activation peptide. The short motif at proline 90 to valine 97 is the Cysteine switch element. Zn(2+) contacts are provided by cysteine 92, histidine 168, aspartate 170, histidine 183, histidine 196, and histidine 218. Glutamate 219 is an active-site residue. Positions 222 and 228 each coordinate Zn(2+). 4 Hemopexin repeats span residues proline 286–leucine 335, proline 336–proline 382, valine 384–isoleucine 432, and glutamate 433–cysteine 476. A disulfide bridge links cysteine 289 with cysteine 476.

This sequence belongs to the peptidase M10A family. It depends on Zn(2+) as a cofactor. Requires Ca(2+) as cofactor.

It localises to the secreted. The protein resides in the extracellular space. The protein localises to the extracellular matrix. It catalyses the reaction Similar to stromelysin 1, but action on collagen types III, IV and V is weak.. In terms of biological role, can degrade fibronectin, gelatins of type I, III, IV, and V; weakly collagens III, IV, and V. Activates procollagenase. The chain is Stromelysin-2 (Mmp10) from Rattus norvegicus (Rat).